The primary structure comprises 432 residues: Bouquet formation protein 4 (432 aa).

A disordered region spans residues 1–21 (MTENEKSRSLPAERNPLYKDD). The HTH APSES-type domain maps to 38–147 (EFPDGPATFV…SSTPSTYATP (110 aa)). The H-T-H motif DNA-binding region spans 73-94 (ATSMFRSAFPKATQEEEDLEMR). 2 stretches are compositionally biased toward low complexity: residues 139–152 (STPS…RPTA) and 163–172 (ESSTSATTTS). Disordered regions lie at residues 139-283 (STPS…GKIR) and 364-384 (KSSI…FEEN). Residues 180–228 (RLAEHLENSKKTILQHDNKEEDKEIHSEENETKDEIKSEKKEPEIKKQE) show a composition bias toward basic and acidic residues. The segment covering 229 to 241 (GGSSTEKVGQPSS) has biased composition (polar residues).

As to quaternary structure, interacts with rap1.

The protein localises to the cytoplasm. Its subcellular location is the nucleus. It is found in the nucleus inner membrane. Connects telomeres to the nuclear envelop (NE) during both vegetative growth and meiosis. This connection ensures clustering of telomeres to the spindle pole body (SPB) when cells enter meiotic prophase. The chain is Bouquet formation protein 4 (bqt4) from Schizosaccharomyces pombe (strain 972 / ATCC 24843) (Fission yeast).